The following is a 205-amino-acid chain: Small ribosomal subunit protein uS4 (205 aa).

The tract at residues 1 to 46 (MSKRASSKYKIDRRMGENIWGRPKSPVNRREYGPGQHGQRRKGKLS) is disordered. The S4 RNA-binding domain occupies 94-154 (SRLDAIVYRA…QKSKQLAIVL (61 aa)).

It belongs to the universal ribosomal protein uS4 family. As to quaternary structure, part of the 30S ribosomal subunit. Contacts protein S5. The interaction surface between S4 and S5 is involved in control of translational fidelity.

One of the primary rRNA binding proteins, it binds directly to 16S rRNA where it nucleates assembly of the body of the 30S subunit. In terms of biological role, with S5 and S12 plays an important role in translational accuracy. The protein is Small ribosomal subunit protein uS4 of Allorhizobium ampelinum (strain ATCC BAA-846 / DSM 112012 / S4) (Agrobacterium vitis (strain S4)).